The primary structure comprises 85 residues: Putative membrane protein insertion efficiency factor (85 aa).

A disordered region spans residues 62-85 (KGGFDPVPLKKDKSASKHSHKHNH).

Belongs to the UPF0161 family.

It is found in the cell membrane. Could be involved in insertion of integral membrane proteins into the membrane. This Staphylococcus aureus (strain Mu3 / ATCC 700698) protein is Putative membrane protein insertion efficiency factor.